The following is a 790-amino-acid chain: MPPIIHERSIEIAGRLLTIETGRVAEQADGAVLVRYGETVVLTTVVGAKQPVEGIDFFPLTVEYEEKMYAAGKIPGGFFRREGKPSEAAILAARLTDRPIRPLFPKGYRNEVQVISTVLSADQENEPDVLSIIGASAALTLSDIPWYGPVGAVRIGELDGELVINPTSHQLLESRMDIVVAGTADAILMVEGQANEISEDRFIEAVVRAHQEIKRIVAVQLELQAVAGKPKREFVPPQENVELKQQIADYLGDRLREAVFNPDKTLRVQATAALREEVIAHFVPNEPLAIGTPQSGLPTAKEVGDLFDSLVKELVRRTILEQGERPDGRKPDEIREIWIQVGLLPRPHGSALFTRGQTQVLTVCTLGTKEEEQFLDSLGIEETKRYMHHYNFPPFSTGEIRRLRGPSRRDIGHGALAERALLAVLPSEDEFPYTMRLVSEVLSSNGSTSMASVCGSSLALMDAGVPIRKPVAGVAMGLVTDQTTGRYTILTDIQGIEDALGDMDFKVAGTRDGITAIQMDIKVMGITPEIMRDALEQARRGRLFILDKMSEVIDAPRPEMSPYAPRILRIKIKPEQIGEVIGPGGRVIRAIQEQTGTKISIEEDGTVFISAANEDAARRAVREIERLTRVPEVGEIFYGRVVTIIPSGAFVEILPGKDGFLHISEIAPERVRSVEDVLKVGQEINVMVIGVRPDGKINLSRKALLEKEAAERAATAQAPADGRSHQPRAPQRPSGTAQPERRPGPPTPRRPEQRGPSRPPRPQAQRSTPPPGQYRIGDRLKELLGEDEPN.

Residues Asp-498 and Asp-504 each coordinate Mg(2+). The 60-residue stretch at 565 to 624 folds into the KH domain; sequence PRILRIKIKPEQIGEVIGPGGRVIRAIQEQTGTKISIEEDGTVFISAANEDAARRAVREI. In terms of domain architecture, S1 motif spans 634–702; the sequence is GEIFYGRVVT…PDGKINLSRK (69 aa). The disordered stretch occupies residues 710–790; it reads AERAATAQAP…KELLGEDEPN (81 aa). The segment covering 739 to 755 has biased composition (basic and acidic residues); sequence PERRPGPPTPRRPEQRG. The segment covering 757–772 has biased composition (pro residues); the sequence is SRPPRPQAQRSTPPPG.

Belongs to the polyribonucleotide nucleotidyltransferase family. Requires Mg(2+) as cofactor.

The protein resides in the cytoplasm. It catalyses the reaction RNA(n+1) + phosphate = RNA(n) + a ribonucleoside 5'-diphosphate. In terms of biological role, involved in mRNA degradation. Catalyzes the phosphorolysis of single-stranded polyribonucleotides processively in the 3'- to 5'-direction. The polypeptide is Polyribonucleotide nucleotidyltransferase (Thermomicrobium roseum (strain ATCC 27502 / DSM 5159 / P-2)).